We begin with the raw amino-acid sequence, 252 residues long: tRNA pseudouridine synthase A (252 aa).

The active-site Nucleophile is the Asp-52. Tyr-110 provides a ligand contact to substrate.

It belongs to the tRNA pseudouridine synthase TruA family. As to quaternary structure, homodimer.

It carries out the reaction uridine(38/39/40) in tRNA = pseudouridine(38/39/40) in tRNA. Formation of pseudouridine at positions 38, 39 and 40 in the anticodon stem and loop of transfer RNAs. The protein is tRNA pseudouridine synthase A of Blochmanniella floridana.